Here is a 567-residue protein sequence, read N- to C-terminus: ATP-dependent RNA helicase HAS1 (567 aa).

Residues Met-1–Gly-109 are disordered. Residues Glu-30–Asp-40 show a composition bias toward acidic residues. Positions Glu-35 to Tyr-88 form a coiled coil. Residues Asp-103 to Ala-131 carry the Q motif motif. A Helicase ATP-binding domain is found at Ile-134–Tyr-310. Ala-147 to Thr-154 is a binding site for ATP. The DEAD box signature appears at Asp-257–Asp-260. The region spanning Gly-324 to Val-484 is the Helicase C-terminal domain.

The protein belongs to the DEAD box helicase family. DDX18/HAS1 subfamily. As to quaternary structure, associates in the nucleolus with the 60S and pre-60S ribosomal subunits.

It is found in the nucleus. Its subcellular location is the nucleolus. It catalyses the reaction ATP + H2O = ADP + phosphate + H(+). Functionally, ATP-dependent RNA helicase involved in 40S ribosomal subunit biogenesis. Required for the processing and cleavage of 35S pre-rRNA at sites A0, A1, and A2, leading to mature 18S rRNA. The protein is ATP-dependent RNA helicase HAS1 (HAS1) of Scheffersomyces stipitis (strain ATCC 58785 / CBS 6054 / NBRC 10063 / NRRL Y-11545) (Yeast).